We begin with the raw amino-acid sequence, 393 residues long: S-adenosylmethionine synthase (393 aa).

Position 16 (His16) interacts with ATP. Position 18 (Asp18) interacts with Mg(2+). Glu44 lines the K(+) pocket. Residues Glu57 and Gln100 each coordinate L-methionine. The flexible loop stretch occupies residues 100 to 110; sequence QSNDIAQGVDH. Residues 167–169, 238–239, Asp247, 253–254, Ala270, and Lys274 each bind ATP; these read DAK, RF, and RK. Residue Asp247 participates in L-methionine binding. Lys278 lines the L-methionine pocket.

The protein belongs to the AdoMet synthase family. In terms of assembly, homotetramer; dimer of dimers. Mg(2+) serves as cofactor. The cofactor is K(+).

The protein localises to the cytoplasm. The catalysed reaction is L-methionine + ATP + H2O = S-adenosyl-L-methionine + phosphate + diphosphate. It functions in the pathway amino-acid biosynthesis; S-adenosyl-L-methionine biosynthesis; S-adenosyl-L-methionine from L-methionine: step 1/1. In terms of biological role, catalyzes the formation of S-adenosylmethionine (AdoMet) from methionine and ATP. The overall synthetic reaction is composed of two sequential steps, AdoMet formation and the subsequent tripolyphosphate hydrolysis which occurs prior to release of AdoMet from the enzyme. This is S-adenosylmethionine synthase from Variovorax paradoxus (strain S110).